The primary structure comprises 245 residues: Uridylate kinase (245 aa).

20–23 (KLSG) is an ATP binding site. G60 contributes to the UMP binding site. 2 residues coordinate ATP: G61 and R65. Residues D80 and 141-148 (AGLPYFST) contribute to the UMP site. Y175 and D178 together coordinate ATP.

The protein belongs to the UMP kinase family. In terms of assembly, homohexamer.

It localises to the cytoplasm. The catalysed reaction is UMP + ATP = UDP + ADP. Its pathway is pyrimidine metabolism; CTP biosynthesis via de novo pathway; UDP from UMP (UMPK route): step 1/1. Its activity is regulated as follows. Inhibited by UTP. Its function is as follows. Catalyzes the reversible phosphorylation of UMP to UDP. This Arthrobacter sp. (strain FB24) protein is Uridylate kinase.